The following is a 123-amino-acid chain: Protein Wnt-7 (123 aa).

The O-palmitoleoyl serine; by PORCN moiety is linked to residue serine 1. Residues asparagine 79 and asparagine 90 are each glycosylated (N-linked (GlcNAc...) asparagine). Cysteine 89 and cysteine 104 are disulfide-bonded.

The protein belongs to the Wnt family. Palmitoleoylation is required for efficient binding to frizzled receptors. Depalmitoleoylation leads to Wnt signaling pathway inhibition.

The protein resides in the secreted. It localises to the extracellular space. Its subcellular location is the extracellular matrix. Its function is as follows. Ligand for members of the frizzled family of seven transmembrane receptors. Probable developmental protein. May be a signaling molecule which affects the development of discrete regions of tissues. Is likely to signal over only few cell diameters. The protein is Protein Wnt-7 (WNT-7) of Strongylocentrotus purpuratus (Purple sea urchin).